The chain runs to 130 residues: Cuticle protein 14 isoform a (130 aa).

In terms of domain architecture, Chitin-binding type R&amp;R spans 24–90 (IGNYNFGYNE…NVHTNEPGTD (67 aa)).

This chain is Cuticle protein 14 isoform a, found in Limulus polyphemus (Atlantic horseshoe crab).